We begin with the raw amino-acid sequence, 169 residues long: Centrosomal protein 20 (169 aa).

The tract at residues 1–104 (MATVGDLKAV…VVEDLNSQSV (104 aa)) is necessary and sufficient for homooligomerization and localization to centrosomes and pericentriolar satellites. The region spanning 49–81 (ENLLINELIREYLAFNKYSYTSSVLTAETGLSE) is the LisH domain. The segment at 135–169 (TFRNIPRGRNTKDTHSGPVQLTQTSTEDWHQRRHR) is disordered. A compositionally biased stretch (polar residues) spans 151–160 (GPVQLTQTST).

This sequence belongs to the CEP43 family. As to quaternary structure, homooligomer; probably required for localization to centrosomes.

It localises to the cell projection. It is found in the cilium. Its subcellular location is the cytoplasm. The protein resides in the cytoskeleton. The protein localises to the cilium basal body. It localises to the microtubule organizing center. It is found in the centrosome. Its subcellular location is the cytoplasmic granule. The protein resides in the centriolar satellite. Involved in the biogenesis of cilia. Required for the recruitment of PLK1 to centrosomes and S phase progression. The chain is Centrosomal protein 20 (Cep20) from Xenopus laevis (African clawed frog).